A 231-amino-acid chain; its full sequence is Phosphatidylserine decarboxylase proenzyme (231 aa).

Catalysis depends on serine 200, which acts as the Schiff-base intermediate with substrate; via pyruvic acid. A Pyruvic acid (Ser); by autocatalysis modification is found at serine 200.

This sequence belongs to the phosphatidylserine decarboxylase family. PSD-A subfamily. In terms of assembly, heterodimer of a large membrane-associated beta subunit and a small pyruvoyl-containing alpha subunit. Pyruvate serves as cofactor. Post-translationally, is synthesized initially as an inactive proenzyme. Formation of the active enzyme involves a self-maturation process in which the active site pyruvoyl group is generated from an internal serine residue via an autocatalytic post-translational modification. Two non-identical subunits are generated from the proenzyme in this reaction, and the pyruvate is formed at the N-terminus of the alpha chain, which is derived from the carboxyl end of the proenzyme. The post-translation cleavage follows an unusual pathway, termed non-hydrolytic serinolysis, in which the side chain hydroxyl group of the serine supplies its oxygen atom to form the C-terminus of the beta chain, while the remainder of the serine residue undergoes an oxidative deamination to produce ammonia and the pyruvoyl prosthetic group on the alpha chain.

The protein resides in the cell membrane. It catalyses the reaction a 1,2-diacyl-sn-glycero-3-phospho-L-serine + H(+) = a 1,2-diacyl-sn-glycero-3-phosphoethanolamine + CO2. It functions in the pathway phospholipid metabolism; phosphatidylethanolamine biosynthesis; phosphatidylethanolamine from CDP-diacylglycerol: step 2/2. Catalyzes the formation of phosphatidylethanolamine (PtdEtn) from phosphatidylserine (PtdSer). The sequence is that of Phosphatidylserine decarboxylase proenzyme from Mycobacterium tuberculosis (strain ATCC 25177 / H37Ra).